The following is a 777-amino-acid chain: Serine/threonine-protein kinase PLK4 (777 aa).

Positions 14-268 (YEVQHLLGKG…LEQVLRHPFL (255 aa)) constitute a Protein kinase domain. ATP is bound by residues 20–28 (LGKGGFASV) and lysine 43. Residue aspartate 139 is the Proton acceptor of the active site. Positions 371 to 381 (TNNLAPFTSDS) are enriched in polar residues. The segment at 371–390 (TNNLAPFTSDSDMIPSPVGE) is disordered. Positions 390-507 (EKRLLMPPLE…ARFVGLVKSK (118 aa)) constitute a Cryptic POLO box 1 (CPB1) domain. Positions 508 to 611 (TPKITFFSSL…GRRPAADMHA (104 aa)) constitute a Cryptic POLO box 2 (CPB2) domain. A POLO box domain is found at 669–748 (PIKRITVPEI…MPQLQMKLKC (80 aa)).

This sequence belongs to the protein kinase superfamily. Ser/Thr protein kinase family. CDC5/Polo subfamily. As to quaternary structure, homodimer. Post-translationally, ubiquitinated by the SCF(Slimb) ubiquitin ligase complex; leading to its degradation by the proteasome during interphase and regulating centriole number and ensuring the block to centriole reduplication.

It localises to the cytoplasm. It is found in the cytoskeleton. Its subcellular location is the microtubule organizing center. The protein localises to the centrosome. The protein resides in the centriole. The catalysed reaction is L-seryl-[protein] + ATP = O-phospho-L-seryl-[protein] + ADP + H(+). The enzyme catalyses L-threonyl-[protein] + ATP = O-phospho-L-threonyl-[protein] + ADP + H(+). In terms of biological role, serine/threonine-protein kinase that plays a central role in centriole duplication. Able to trigger procentriole formation on the surface of the mother centriole cylinder, using mother centriole as a platform, leading to the recruitment of centriole biogenesis proteins such as sas-6. When overexpressed, it is able to induce centrosome amplification through the simultaneous generation of multiple procentrioles adjoining each parental centriole during S phase. Centrosome amplification following overexpression can initiate tumorigenesis, highlighting the importance of centrosome regulation in cancers. The sequence is that of Serine/threonine-protein kinase PLK4 (SAK) from Drosophila persimilis (Fruit fly).